A 287-amino-acid polypeptide reads, in one-letter code: Isopentenyl-diphosphate Delta-isomerase 1, chloroplastic (287 aa).

The transit peptide at 1–51 (MTLLLNTTAKLYIAPRTLPFTSSSTFARSPFLRIPSLLKPLSPLTARVSLS) directs the protein to the chloroplast. A substrate-binding site is contributed by lysine 90. Positions 94 and 106 each coordinate Mg(2+). The 153-residue stretch at 104–256 (LLHRAFSVFL…GLKLSPWFRL (153 aa)) folds into the Nudix hydrolase domain. Substrate is bound by residues arginine 125 and lysine 129. Cysteine 141 is an active-site residue. Position 142 (serine 142) interacts with substrate. Positions 142–172 (SHPLYRESELIDEESLGARNAAQRKLLDELG) match the Nudix box motif. 2 residues coordinate Mg(2+): glutamate 201 and glutamate 203. Glutamate 203 is a catalytic residue.

Belongs to the IPP isomerase type 1 family. In terms of assembly, monomer. It depends on Mg(2+) as a cofactor. In terms of tissue distribution, mainly expressed in roots and trichomes and, to a lower extent, in leaves, flowers and stems.

The protein localises to the plastid. Its subcellular location is the chloroplast. It catalyses the reaction isopentenyl diphosphate = dimethylallyl diphosphate. It functions in the pathway isoprenoid biosynthesis; dimethylallyl diphosphate biosynthesis; dimethylallyl diphosphate from isopentenyl diphosphate: step 1/1. Its pathway is porphyrin-containing compound metabolism; chlorophyll biosynthesis. Catalyzes the 1,3-allylic rearrangement of the homoallylic substrate isopentenyl (IPP) to its highly electrophilic allylic isomer, dimethylallyl diphosphate (DMAPP). The polypeptide is Isopentenyl-diphosphate Delta-isomerase 1, chloroplastic (Cannabis sativa (Hemp)).